The chain runs to 542 residues: Heterogeneous nuclear ribonucleoprotein L-like (542 aa).

The interval 1–71 is disordered; that stretch reads MSSSSSSPRE…QPEAGGSHHK (71 aa). The segment covering 18-29 has biased composition (basic and acidic residues); sequence YESQAKRLKTEE. K26 is covalently cross-linked (Glycyl lysine isopeptide (Lys-Gly) (interchain with G-Cter in SUMO2)). S35 carries the phosphoserine modification. A Phosphothreonine modification is found at T46. The span at 48-58 shows a compositional bias: gly residues; it reads RGGGDGGGGGR. Phosphoserine is present on residues S59, S68, and S75. 3 RRM domains span residues 76-150, 166-244, and 335-409; these read PVVH…YSTS, NKVL…YARP, and SVVM…VSKQ. Residue K491 forms a Glycyl lysine isopeptide (Lys-Gly) (interchain with G-Cter in SUMO2) linkage.

In terms of assembly, interacts with HNRNPL. In terms of tissue distribution, widely expressed. Detected in bone marrow stroma cells, skeletal muscle, heart, placenta, pancreas, kidney and lung.

Its function is as follows. RNA-binding protein that functions as a regulator of alternative splicing for multiple target mRNAs, including PTPRC/CD45 and STAT5A. Required for alternative splicing of PTPRC. The chain is Heterogeneous nuclear ribonucleoprotein L-like (HNRNPLL) from Homo sapiens (Human).